The following is a 616-amino-acid chain: Dihydroxy-acid dehydratase (616 aa).

Aspartate 81 contacts Mg(2+). Cysteine 122 is a [2Fe-2S] cluster binding site. Residues aspartate 123 and lysine 124 each contribute to the Mg(2+) site. Lysine 124 carries the N6-carboxylysine modification. Cysteine 195 serves as a coordination point for [2Fe-2S] cluster. Glutamate 491 contributes to the Mg(2+) binding site. The active-site Proton acceptor is the serine 517.

The protein belongs to the IlvD/Edd family. As to quaternary structure, homodimer. The cofactor is [2Fe-2S] cluster. It depends on Mg(2+) as a cofactor.

It catalyses the reaction (2R)-2,3-dihydroxy-3-methylbutanoate = 3-methyl-2-oxobutanoate + H2O. It carries out the reaction (2R,3R)-2,3-dihydroxy-3-methylpentanoate = (S)-3-methyl-2-oxopentanoate + H2O. The protein operates within amino-acid biosynthesis; L-isoleucine biosynthesis; L-isoleucine from 2-oxobutanoate: step 3/4. It functions in the pathway amino-acid biosynthesis; L-valine biosynthesis; L-valine from pyruvate: step 3/4. Functions in the biosynthesis of branched-chain amino acids. Catalyzes the dehydration of (2R,3R)-2,3-dihydroxy-3-methylpentanoate (2,3-dihydroxy-3-methylvalerate) into 2-oxo-3-methylpentanoate (2-oxo-3-methylvalerate) and of (2R)-2,3-dihydroxy-3-methylbutanoate (2,3-dihydroxyisovalerate) into 2-oxo-3-methylbutanoate (2-oxoisovalerate), the penultimate precursor to L-isoleucine and L-valine, respectively. The chain is Dihydroxy-acid dehydratase from Yersinia enterocolitica serotype O:8 / biotype 1B (strain NCTC 13174 / 8081).